The chain runs to 372 residues: uncharacterized protein (372 aa).

Positions 49–72 are disordered; sequence FSHKGGGKGGGSGAGSNDGGCSGE. Residues 55–70 show a composition bias toward gly residues; it reads GKGGGSGAGSNDGGCS.

This is an uncharacterized protein from Halorubrum lacusprofundi (strain ATCC 49239 / DSM 5036 / JCM 8891 / ACAM 34).